Reading from the N-terminus, the 452-residue chain is NADH-quinone oxidoreductase subunit N 2 (452 aa).

The next 14 helical transmembrane spans lie at 6–26 (VLIP…YGFI), 33–53 (TYIL…FNFG), 70–90 (TLRI…YSDL), 97–117 (SVEY…MIVA), 120–140 (LLIL…LAGF), 154–174 (YFIL…FFYA), 194–214 (ILLG…LAPF), 232–252 (FLST…FLSI), 258–278 (IQDL…VLAL), 286–306 (MLAY…LLPE), 311–331 (ISLI…FAFI), 355–375 (FCII…GFIV), 387–407 (GYGS…FYYL), and 432–452 (ALSG…LLIF).

Belongs to the complex I subunit 2 family. NDH-1 is composed of 14 different subunits. Subunits NuoA, H, J, K, L, M, N constitute the membrane sector of the complex.

Its subcellular location is the cell inner membrane. The catalysed reaction is a quinone + NADH + 5 H(+)(in) = a quinol + NAD(+) + 4 H(+)(out). Functionally, NDH-1 shuttles electrons from NADH, via FMN and iron-sulfur (Fe-S) centers, to quinones in the respiratory chain. The immediate electron acceptor for the enzyme in this species is believed to be ubiquinone. Couples the redox reaction to proton translocation (for every two electrons transferred, four hydrogen ions are translocated across the cytoplasmic membrane), and thus conserves the redox energy in a proton gradient. This chain is NADH-quinone oxidoreductase subunit N 2, found in Thermodesulfovibrio yellowstonii (strain ATCC 51303 / DSM 11347 / YP87).